Reading from the N-terminus, the 225-residue chain is Imidazole glycerol phosphate synthase subunit HisH (225 aa).

The Glutamine amidotransferase type-1 domain maps to 3-225; sequence TIAIVDYGMG…LYRNFVDWQP (223 aa). Cys-82 acts as the Nucleophile in catalysis. Catalysis depends on residues His-205 and Glu-207.

In terms of assembly, heterodimer of HisH and HisF.

It is found in the cytoplasm. It carries out the reaction 5-[(5-phospho-1-deoxy-D-ribulos-1-ylimino)methylamino]-1-(5-phospho-beta-D-ribosyl)imidazole-4-carboxamide + L-glutamine = D-erythro-1-(imidazol-4-yl)glycerol 3-phosphate + 5-amino-1-(5-phospho-beta-D-ribosyl)imidazole-4-carboxamide + L-glutamate + H(+). The enzyme catalyses L-glutamine + H2O = L-glutamate + NH4(+). The protein operates within amino-acid biosynthesis; L-histidine biosynthesis; L-histidine from 5-phospho-alpha-D-ribose 1-diphosphate: step 5/9. Functionally, IGPS catalyzes the conversion of PRFAR and glutamine to IGP, AICAR and glutamate. The HisH subunit catalyzes the hydrolysis of glutamine to glutamate and ammonia as part of the synthesis of IGP and AICAR. The resulting ammonia molecule is channeled to the active site of HisF. This Bordetella pertussis (strain Tohama I / ATCC BAA-589 / NCTC 13251) protein is Imidazole glycerol phosphate synthase subunit HisH.